Here is a 425-residue protein sequence, read N- to C-terminus: Serine/threonine-protein kinase VRK1 (425 aa).

Residues 38–329 (WKLGSAVGQG…KLRGILQQGL (292 aa)) form the Protein kinase domain. Residues 44–52 (VGQGGFGLL) and lysine 72 contribute to the ATP site. Aspartate 178 functions as the Proton acceptor in the catalytic mechanism. The interval 343-425 (GVATNSTSLP…KSRGRPKKNS (83 aa)) is disordered. The segment covering 415–425 (KKSRGRPKKNS) has biased composition (basic residues).

This sequence belongs to the protein kinase superfamily. CK1 Ser/Thr protein kinase family. VRK subfamily.

It localises to the nucleus. It is found in the cytoplasm. Its subcellular location is the cajal body. The enzyme catalyses L-seryl-[protein] + ATP = O-phospho-L-seryl-[protein] + ADP + H(+). It carries out the reaction L-threonyl-[protein] + ATP = O-phospho-L-threonyl-[protein] + ADP + H(+). Serine/threonine kinase involved in the regulation of key cellular processes including the cell cycle, nuclear condensation, transcription regulation, and DNA damage response. Controls chromatin organization and remodeling by mediating phosphorylation of histone H3 on 'Thr-4' and histone H2AX (H2aXT4ph). It also phosphorylates KAT5 in response to DNA damage, promoting KAT5 association with chromatin and histone acetyltransferase activity. Is involved in the regulation of cell cycle progression of neural progenitors, and is required for proper cortical neuronal migration. Is involved in neurite elongation and branching in motor neurons, and has an essential role in Cajal bodies assembly, acting through COIL phosphorylation and the control of coilin degradation. Involved in Golgi disassembly during the cell cycle: following phosphorylation by PLK3 during mitosis, it is required to induce Golgi fragmentation. Phosphorylates BANF1: disrupts its ability to bind DNA, reduces its binding to LEM domain-containing proteins and causes its relocalization from the nucleus to the cytoplasm. Phosphorylates TP53BP1 and p53/TP53 on 'Thr-18', preventing the interaction between p53/TP53 and MDM2. Phosphorylates ATF2 which activates its transcriptional activity. Phosphorylates JUN. The sequence is that of Serine/threonine-protein kinase VRK1 (vrk1) from Danio rerio (Zebrafish).